The sequence spans 345 residues: S-adenosylmethionine:tRNA ribosyltransferase-isomerase (345 aa).

Belongs to the QueA family. Monomer.

It is found in the cytoplasm. The enzyme catalyses 7-aminomethyl-7-carbaguanosine(34) in tRNA + S-adenosyl-L-methionine = epoxyqueuosine(34) in tRNA + adenine + L-methionine + 2 H(+). The protein operates within tRNA modification; tRNA-queuosine biosynthesis. Functionally, transfers and isomerizes the ribose moiety from AdoMet to the 7-aminomethyl group of 7-deazaguanine (preQ1-tRNA) to give epoxyqueuosine (oQ-tRNA). The chain is S-adenosylmethionine:tRNA ribosyltransferase-isomerase from Shewanella woodyi (strain ATCC 51908 / MS32).